Reading from the N-terminus, the 498-residue chain is MASQGTKRSYEQMETGGERQNATEIRASVGRMVGGIGRFYIQMCTELKLSDYEGRLIQNSITIERMVLSAFDERRNKYLEEHPSAGKDPKKTGGPIYRRRDGKWIRELILYDKEEIRRIWRQANNGEDATAGLTHLMIWHSNLNDATYQRTRALVRTGMDPRMCSLMQGSTLPRRSGAAGAAVKGVGTMVMELIRMIKRGINDRNFWRGENGRLTRIAYERMCNILKGKFQTAAQRAMMDQVRESRNPGNAEIEDLIFLARSALILRGSVAHKSCLPACVYGLAVASGYDFEREGYSLVGIDPFRLLQNSQVFSLVRPNENPAHKSQLVWMACHSAAFEDLRVSSFIRGTRVVPRGQLSTRGVQIASNENMETMDSSTLELRSRYWAIRTRSGGNTNQQRASAGQISVQPTFSVQRNLPFERATIMAAFTGNTEGRTSDMRTEIIRMMENARPEDVSFQGRGVFELSDEKATNPIVPSFDMSNEGSYFFGDNAEEYDN.

The Unconventional nuclear localization signal motif lies at 1–18 (MASQGTKRSYEQMETGGE). The segment at 1 to 21 (MASQGTKRSYEQMETGGERQN) is disordered. The short motif at 198-216 (KRGINDRNFWRGENGRLTR) is the Bipartite nuclear localization signal element.

It belongs to the influenza viruses nucleoprotein family. As to quaternary structure, homomultimerizes to form the nucleocapsid. May bind host exportin-1/XPO1. Binds to viral genomic RNA. Protein-RNA contacts are mediated by a combination of electrostatic interactions between positively charged residues and the phosphate backbone and planar interactions between aromatic side chains and bases. Post-translationally, late in virus-infected cells, may be cleaved from a 56-kDa protein to a 53-kDa protein by a cellular caspase. This cleavage might be a marker for the onset of apoptosis in infected cells or have a specific function in virus host interaction.

It localises to the virion. The protein resides in the host nucleus. Its function is as follows. Encapsidates the negative strand viral RNA, protecting it from nucleases. The encapsidated genomic RNA is termed the ribonucleoprotein (RNP) and serves as template for transcription and replication. The RNP needs to be localized in the host nucleus to start an infectious cycle, but is too large to diffuse through the nuclear pore complex. NP comprises at least 2 nuclear localization signals that are responsible for the active RNP import into the nucleus through cellular importin alpha/beta pathway. Later in the infection, nclear export of RNPs are mediated through viral proteins NEP interacting with M1 which binds nucleoproteins. It is possible that nucleoprotein binds directly host exportin-1/XPO1 and plays an active role in RNPs nuclear export. M1 interaction with RNP seems to hide nucleoprotein's nuclear localization signals. Soon after a virion infects a new cell, M1 dissociates from the RNP under acidification of the virion driven by M2 protein. Dissociation of M1 from RNP unmasks nucleoprotein's nuclear localization signals, targeting the RNP to the nucleus. The protein is Nucleoprotein of Influenza A virus (strain A/Turkey/Wisconsin/1/1966 H9N2).